Consider the following 433-residue polypeptide: Glutamate-1-semialdehyde 2,1-aminomutase (433 aa).

K273 is subject to N6-(pyridoxal phosphate)lysine.

The protein belongs to the class-III pyridoxal-phosphate-dependent aminotransferase family. HemL subfamily. In terms of assembly, homodimer. Pyridoxal 5'-phosphate is required as a cofactor.

Its subcellular location is the cytoplasm. It carries out the reaction (S)-4-amino-5-oxopentanoate = 5-aminolevulinate. It participates in porphyrin-containing compound metabolism; protoporphyrin-IX biosynthesis; 5-aminolevulinate from L-glutamyl-tRNA(Glu): step 2/2. This chain is Glutamate-1-semialdehyde 2,1-aminomutase, found in Polynucleobacter necessarius subsp. necessarius (strain STIR1).